The sequence spans 158 residues: MQEQATSSIAASSLPSSSERSSSSALHHELKEGMESDDEIRRVPEMGGEATGTTSASGRDGVSAAGQAQPSAGTQRKRGRSPADKENKRLKRLLRNRVSAQQARERKKAYLIDLEARVKELETKNAELEERLSTLQNENQMLRHILKNTTAGAQEGRK.

Residues M1–A25 show a composition bias toward low complexity. Residues M1–E105 are disordered. Positions L26–P44 are enriched in basic and acidic residues. The tract at residues E35–M46 is interaction with COP1. The span at G47 to G58 shows a compositional bias: low complexity. Positions E86–T149 constitute a bZIP domain. The tract at residues K88–K108 is basic motif. The segment at L114–L142 is leucine-zipper.

Belongs to the bZIP family. Interacts with COP1. Ubiquitinated by COP1. Ubiquitination takes place in darkness and leads to its subsequent degradation, thereby preventing to activate photomorphogenesis signals.

The protein localises to the nucleus. Its function is as follows. Transcription factor that promotes photomorphogenesis in the light and positively regulates fruit pigmentation and fruit nutritional quality. Probably acts downstream of the light receptor network and directly affects transcription of light-induced genes. In Solanum lycopersicum (Tomato), this protein is Transcription factor HY5 (HY5).